The chain runs to 438 residues: Trigger factor (438 aa).

Residues 163 to 248 (GDIITIDYEG…VKEIKRKELA (86 aa)) enclose the PPIase FKBP-type domain.

It belongs to the FKBP-type PPIase family. Tig subfamily.

The protein resides in the cytoplasm. It carries out the reaction [protein]-peptidylproline (omega=180) = [protein]-peptidylproline (omega=0). In terms of biological role, involved in protein export. Acts as a chaperone by maintaining the newly synthesized protein in an open conformation. Functions as a peptidyl-prolyl cis-trans isomerase. The chain is Trigger factor from Desulforudis audaxviator (strain MP104C).